A 54-amino-acid polypeptide reads, in one-letter code: UPF0391 membrane protein Bpro_0879 (54 aa).

A run of 2 helical transmembrane segments spans residues 6–26 (VVFL…IAAG) and 30–50 (IAKI…VMGL).

The protein belongs to the UPF0391 family.

Its subcellular location is the cell membrane. The polypeptide is UPF0391 membrane protein Bpro_0879 (Polaromonas sp. (strain JS666 / ATCC BAA-500)).